A 503-amino-acid polypeptide reads, in one-letter code: Mitogen-activated protein kinase kinae mkk2 (503 aa).

The segment at 1–130 is disordered; it reads MSSSPVPLLR…ASGPASASSS (130 aa). Residues 53-66 show a composition bias toward pro residues; that stretch reads APQPQRPSTRPAPP. A compositionally biased stretch (polar residues) spans 100 to 115; that stretch reads TGLNESTGHSRSSSFT. Residues 121-130 are compositionally biased toward low complexity; the sequence is ASGPASASSS. A Protein kinase domain is found at 211–481; that stretch reads IIELGSLGEG…PWRMLEHPWM (271 aa). ATP contacts are provided by residues 217 to 225 and Lys-240; that span reads LGEGAGGAV. Asp-338 (proton acceptor) is an active-site residue.

It belongs to the protein kinase superfamily. STE Ser/Thr protein kinase family. MAP kinase kinase subfamily.

It carries out the reaction L-seryl-[protein] + ATP = O-phospho-L-seryl-[protein] + ADP + H(+). It catalyses the reaction L-threonyl-[protein] + ATP = O-phospho-L-threonyl-[protein] + ADP + H(+). Functionally, mitogen-activated kinase kinase (MAPKK), part of the cell wall integrity (CWI) signaling pathway composed by three protein kinases bck1, mkk2 and mpkA and responsible for the maintaining of cell-wall integrity balance. The CWI pathway also regulates the oxidative stress response, as well as the production of some secondary metabolites including pyomelanin. The polypeptide is Mitogen-activated protein kinase kinae mkk2 (Aspergillus fumigatus (strain CBS 144.89 / FGSC A1163 / CEA10) (Neosartorya fumigata)).